Reading from the N-terminus, the 249-residue chain is MIPEVSNEASQPAAHRQENVDPNEIAKFDAVAARWWDLEGEFKPLHHINPLRLDYILERSGGLFGKNVLDVGCGGGILAESMAREGAKVTGLDMGAEPLAVARLHALESGVMLAYHQQTVEEHAEAHPGAYDVVTCMEMLEHVPDPASIVRACARLVKPGGEVFFSTLNRNPKAWLMAIVGAEYVLRMVPRGTHDITKFIKPAELLGWVDDTPLREQHIIGLHYNPLRDRFYLGGNVDVNYMLHTRRQA.

The segment at 1–21 (MIPEVSNEASQPAAHRQENVD) is disordered. The S-adenosyl-L-methionine site is built by R52, G72, D93, and M137.

It belongs to the methyltransferase superfamily. UbiG/COQ3 family.

The catalysed reaction is a 3-demethylubiquinol + S-adenosyl-L-methionine = a ubiquinol + S-adenosyl-L-homocysteine + H(+). It catalyses the reaction a 3-(all-trans-polyprenyl)benzene-1,2-diol + S-adenosyl-L-methionine = a 2-methoxy-6-(all-trans-polyprenyl)phenol + S-adenosyl-L-homocysteine + H(+). The protein operates within cofactor biosynthesis; ubiquinone biosynthesis. In terms of biological role, O-methyltransferase that catalyzes the 2 O-methylation steps in the ubiquinone biosynthetic pathway. The sequence is that of Ubiquinone biosynthesis O-methyltransferase from Sodalis glossinidius (strain morsitans).